Reading from the N-terminus, the 580-residue chain is 9,13-epoxylabda-14-ene synthase, chloroplastic (580 aa).

A chloroplast-targeting transit peptide spans 1–32 (MSITFNLKIAPFSGPGIQRSKETFPATEIQIT). D322, D326, N466, T470, and E474 together coordinate Mg(2+). The DDXXD motif motif lies at 322 to 326 (DDFFD).

This sequence belongs to the terpene synthase family. Mg(2+) serves as cofactor. Present in both leaves and flowers, with higher levels in leaves.

It is found in the plastid. It localises to the chloroplast. It carries out the reaction peregrinol diphosphate = (13R)-9,13-epoxylabd-14-ene + diphosphate. The enzyme catalyses (+)-copalyl diphosphate = miltiradiene + diphosphate. The catalysed reaction is 8-hydroxycopalyl diphosphate = (13R)-manoyl oxide + diphosphate. The protein operates within secondary metabolite biosynthesis; terpenoid biosynthesis. Its function is as follows. Involved in the biosynthesis of labdane-type diterpenoid including marrubiin and other labdane-related furanoid diterpenoids with potential applications as anti-diabetics, analgesics or vasorelaxants. Terpene synthase the catalyzes the conversion of peregrinol diphosphate to 9,13(R)-epoxy-labd-14-ene, from (+)-copalyl diphosphate ((+)-CPP) to miltiradiene and from 8-hydroxycopalyl diphosphate (LPP, labda-13-en-8-ol diphosphate) to manoyl oxide. In Marrubium vulgare (White horehound), this protein is 9,13-epoxylabda-14-ene synthase, chloroplastic.